The following is a 446-amino-acid chain: C-type lectin domain family 18 member A (446 aa).

A signal peptide spans 1–26 (MLHPETSPGRGHLLAVLLALLGTAWA). Residues 52 to 182 (LSLHNRLRSW…AAIEAFVCAY (131 aa)) form the SCP domain. N-linked (GlcNAc...) asparagine glycosylation is present at N144. Residues 228–261 (PRNPCRMSCQNHGRLNISTCHCHCPPGYTGRYCQ) form the EGF-like domain. Cystine bridges form between C236–C249, C251–C260, C327–C432, and C408–C424. The 128-residue stretch at 306-433 (IDGDCFMVSS…CKTRNRYICQ (128 aa)) folds into the C-type lectin domain.

N-glycosylated. Dectected in all cell lines tested and in peripheral blood cells.

The protein localises to the secreted. It is found in the endoplasmic reticulum. It localises to the golgi apparatus. Its subcellular location is the endosome. In terms of biological role, binds polysaccharides in a Ca(2+)-independent manner with a preferentially binding to fucoidan, beta-glucans and galactans. The chain is C-type lectin domain family 18 member A (CLEC18A) from Homo sapiens (Human).